The chain runs to 313 residues: Formimidoylglutamase (313 aa).

Positions 130, 155, 157, 159, 241, and 243 each coordinate Mn(2+).

Belongs to the arginase family. Requires Mn(2+) as cofactor.

It carries out the reaction N-formimidoyl-L-glutamate + H2O = formamide + L-glutamate. Its pathway is amino-acid degradation; L-histidine degradation into L-glutamate; L-glutamate from N-formimidoyl-L-glutamate (hydrolase route): step 1/1. Functionally, catalyzes the conversion of N-formimidoyl-L-glutamate to L-glutamate and formamide. The sequence is that of Formimidoylglutamase from Salmonella heidelberg (strain SL476).